Consider the following 296-residue polypeptide: Acetyl-coenzyme A carboxylase carboxyl transferase subunit beta (296 aa).

Residues 25–294 (VWTKCTACEQ…PFVEPELISE (270 aa)) form the CoA carboxyltransferase N-terminal domain. Cys29, Cys32, Cys48, and Cys51 together coordinate Zn(2+). A C4-type zinc finger spans residues 29–51 (CTACEQVLYSEELKRNLYVCPKC).

The protein belongs to the AccD/PCCB family. In terms of assembly, acetyl-CoA carboxylase is a heterohexamer composed of biotin carboxyl carrier protein (AccB), biotin carboxylase (AccC) and two subunits each of ACCase subunit alpha (AccA) and ACCase subunit beta (AccD). Zn(2+) is required as a cofactor.

Its subcellular location is the cytoplasm. It catalyses the reaction N(6)-carboxybiotinyl-L-lysyl-[protein] + acetyl-CoA = N(6)-biotinyl-L-lysyl-[protein] + malonyl-CoA. Its pathway is lipid metabolism; malonyl-CoA biosynthesis; malonyl-CoA from acetyl-CoA: step 1/1. Functionally, component of the acetyl coenzyme A carboxylase (ACC) complex. Biotin carboxylase (BC) catalyzes the carboxylation of biotin on its carrier protein (BCCP) and then the CO(2) group is transferred by the transcarboxylase to acetyl-CoA to form malonyl-CoA. In Haemophilus influenzae (strain 86-028NP), this protein is Acetyl-coenzyme A carboxylase carboxyl transferase subunit beta.